Consider the following 271-residue polypeptide: Digeranylgeranylglyceryl phosphate synthase (271 aa).

Helical transmembrane passes span 11-31, 33-53, 88-108, 125-145, 149-169, 201-221, 224-244, and 251-271; these read INCA…GARL, VGAV…NAIN, FAVG…IAAL, LIGN…GAAV, PAPA…REIL, VFAI…VVGW, LVLA…AVAG, and AQRV…ASLL.

Belongs to the UbiA prenyltransferase family. DGGGP synthase subfamily. The cofactor is Mg(2+).

It is found in the cell membrane. The enzyme catalyses sn-3-O-(geranylgeranyl)glycerol 1-phosphate + (2E,6E,10E)-geranylgeranyl diphosphate = 2,3-bis-O-(geranylgeranyl)-sn-glycerol 1-phosphate + diphosphate. The protein operates within membrane lipid metabolism; glycerophospholipid metabolism. Its function is as follows. Prenyltransferase that catalyzes the transfer of the geranylgeranyl moiety of geranylgeranyl diphosphate (GGPP) to the C2 hydroxyl of (S)-3-O-geranylgeranylglyceryl phosphate (GGGP). This reaction is the second ether-bond-formation step in the biosynthesis of archaeal membrane lipids. The protein is Digeranylgeranylglyceryl phosphate synthase of Methanopyrus kandleri (strain AV19 / DSM 6324 / JCM 9639 / NBRC 100938).